The primary structure comprises 320 residues: MNKPQHHSLIILGSGPAGYTAAIYAARANLKPIMITGMEQGGQLMTTTDVDNWPGEAPGLQGPQLMERMQKHAERLDTQFIFDHINEADLNQRPFLLKGDNATYSCDALIIATGASARYLGLPSEKAYMGKGVSACATCDGFFYRGKKVAVVGGGNTAVEEALYLSHIASHVTLIHRRDKLRAEKMLSAQLIKKVEEGKVAIVWSHVIEEVLGDDQGVTGVHLKHVKEEKTQDLTIDGLFIAIGHDPNTKIFKEQLEMDEAGYLRAKSGLQGNATATNIPGVFAAGDVTDHVYRQAITAAGMGCMAALDAERYLDSLNQA.

Thr-36–Gln-43 is an FAD binding site. A disulfide bond links Cys-136 and Cys-139. Asp-287 to Ala-296 is an FAD binding site.

The protein belongs to the class-II pyridine nucleotide-disulfide oxidoreductase family. In terms of assembly, homodimer. FAD serves as cofactor.

The protein localises to the cytoplasm. It carries out the reaction [thioredoxin]-dithiol + NADP(+) = [thioredoxin]-disulfide + NADPH + H(+). The chain is Thioredoxin reductase (trxB) from Coxiella burnetii (strain RSA 493 / Nine Mile phase I).